The primary structure comprises 131 residues: Major pollen allergen Pla l 1 (131 aa).

Intrachain disulfides connect cysteine 17/cysteine 86, cysteine 20/cysteine 131, and cysteine 42/cysteine 74. Zn(2+)-binding residues include histidine 21, aspartate 45, aspartate 73, and glutamate 88. Asparagine 107 carries N-linked (GlcNAc...) asparagine glycosylation.

The protein belongs to the Ole e I family. In terms of processing, exists in two variants: glycosylated and non-glycosylated. Carries a complex, major N-linked glycan, with a alpha-1,3-fucose residue in its structure and probably also a beta-1,2-xylose. The average modification of molecular mass due to glycosylation is approximately 969 Da.

It localises to the secreted. This chain is Major pollen allergen Pla l 1, found in Plantago lanceolata (English plantain).